We begin with the raw amino-acid sequence, 353 residues long: 4-hydroxy-3-methylbut-2-en-1-yl diphosphate synthase (flavodoxin) (353 aa).

Cysteine 268, cysteine 271, cysteine 303, and glutamate 310 together coordinate [4Fe-4S] cluster.

This sequence belongs to the IspG family. [4Fe-4S] cluster is required as a cofactor.

The catalysed reaction is (2E)-4-hydroxy-3-methylbut-2-enyl diphosphate + oxidized [flavodoxin] + H2O + 2 H(+) = 2-C-methyl-D-erythritol 2,4-cyclic diphosphate + reduced [flavodoxin]. It participates in isoprenoid biosynthesis; isopentenyl diphosphate biosynthesis via DXP pathway; isopentenyl diphosphate from 1-deoxy-D-xylulose 5-phosphate: step 5/6. In terms of biological role, converts 2C-methyl-D-erythritol 2,4-cyclodiphosphate (ME-2,4cPP) into 1-hydroxy-2-methyl-2-(E)-butenyl 4-diphosphate. The sequence is that of 4-hydroxy-3-methylbut-2-en-1-yl diphosphate synthase (flavodoxin) from Ruminiclostridium cellulolyticum (strain ATCC 35319 / DSM 5812 / JCM 6584 / H10) (Clostridium cellulolyticum).